Consider the following 270-residue polypeptide: UPF0354 protein BcerKBAB4_4524 (270 aa).

It belongs to the UPF0354 family.

In Bacillus mycoides (strain KBAB4) (Bacillus weihenstephanensis), this protein is UPF0354 protein BcerKBAB4_4524.